The following is a 282-amino-acid chain: (4-alkanoyl-5-oxo-2,5-dihydrofuran-3-yl)methyl phosphate reductase (282 aa).

Position 6–11 (6–11) interacts with NADP(+); that stretch reads GATGAV.

It belongs to the NmrA-type oxidoreductase family.

The catalysed reaction is a [(3S,4R)-4-alkanoyl-5-oxooxolan-3-yl]methyl phosphate + NADP(+) = a (4-alkanoyl-5-oxo-2,5-dihydrofuran-3-yl)methyl phosphate + NADPH + H(+). The enzyme catalyses [(3S,4R)-4-(6-methylheptanoyl)-5-oxooxolan-3-yl]methyl phosphate + NADP(+) = [4-(6-methylheptanoyl)-5-oxo-2H-furan-3-yl]methyl phosphate + NADPH + H(+). Its function is as follows. Involved in the biosynthesis of A factor (2-isocapryloyl-3R-hydroxymethyl-gamma-butyrolactone), a gamma-butyrolactone autoregulator that triggers secondary metabolism and morphogenesis in Streptomyces. Catalyzes the reduction of the butenolide phosphate produced by nonenzymatic intramolecular condensation of the 8-methyl-3-oxononanoyl-DHAP ester. The polypeptide is (4-alkanoyl-5-oxo-2,5-dihydrofuran-3-yl)methyl phosphate reductase (Streptomyces griseus subsp. griseus (strain JCM 4626 / CBS 651.72 / NBRC 13350 / KCC S-0626 / ISP 5235)).